Reading from the N-terminus, the 124-residue chain is Fluoride-specific ion channel FluC 2 (124 aa).

4 helical membrane passes run 1-21 (MSDI…RFQI), 34-54 (FLIL…LSLV), 66-86 (LILF…SFVY), and 103-123 (LFII…FLGT). Gly-76 and Ser-79 together coordinate Na(+).

It belongs to the fluoride channel Fluc/FEX (TC 1.A.43) family.

The protein resides in the cell inner membrane. It catalyses the reaction fluoride(in) = fluoride(out). With respect to regulation, na(+) is not transported, but it plays an essential structural role and its presence is essential for fluoride channel function. Its function is as follows. Fluoride-specific ion channel. Important for reducing fluoride concentration in the cell, thus reducing its toxicity. The chain is Fluoride-specific ion channel FluC 2 from Prochlorococcus marinus (strain NATL2A).